A 341-amino-acid chain; its full sequence is S-adenosylmethionine:tRNA ribosyltransferase-isomerase (341 aa).

This sequence belongs to the QueA family. Monomer.

Its subcellular location is the cytoplasm. The enzyme catalyses 7-aminomethyl-7-carbaguanosine(34) in tRNA + S-adenosyl-L-methionine = epoxyqueuosine(34) in tRNA + adenine + L-methionine + 2 H(+). It participates in tRNA modification; tRNA-queuosine biosynthesis. Its function is as follows. Transfers and isomerizes the ribose moiety from AdoMet to the 7-aminomethyl group of 7-deazaguanine (preQ1-tRNA) to give epoxyqueuosine (oQ-tRNA). In Clostridium botulinum (strain Loch Maree / Type A3), this protein is S-adenosylmethionine:tRNA ribosyltransferase-isomerase.